A 99-amino-acid polypeptide reads, in one-letter code: Large ribosomal subunit protein eL30 (99 aa).

The protein belongs to the eukaryotic ribosomal protein eL30 family.

This is Large ribosomal subunit protein eL30 (rpl30e) from Pyrococcus horikoshii (strain ATCC 700860 / DSM 12428 / JCM 9974 / NBRC 100139 / OT-3).